A 61-amino-acid chain; its full sequence is UPF0337 protein LMOf2365_2190 (61 aa).

A disordered region spans residues 1–61 (MSEDKGMKDK…TGDAKKKLSE (61 aa)).

Belongs to the UPF0337 (CsbD) family.

This is UPF0337 protein LMOf2365_2190 from Listeria monocytogenes serotype 4b (strain F2365).